The following is a 115-amino-acid chain: HTH-type transcriptional regulator SarR (115 aa).

Residues 51-74 (SKEIAKCSEFKPYYLTKALQKLKD) constitute a DNA-binding region (H-T-H motif).

Belongs to the SarA family. As to quaternary structure, homodimer.

Its subcellular location is the cytoplasm. Functionally, negative regulator of sarA transcription at late exponential and stationary growth phases. It contributes to the modulation of target genes downstream of the sarA regulatory cascade. Also, positively regulates expression of primary transcripts RNAII and RNAIII generated by agr (virulence accessory gene regulator) locus. This chain is HTH-type transcriptional regulator SarR (sarR), found in Staphylococcus aureus (strain NCTC 8325 / PS 47).